Reading from the N-terminus, the 2039-residue chain is PHD finger protein 3 (2039 aa).

Phosphoserine is present on residues S97 and S125. Over residues 144-168 (STIAKRSNAAPLSNTKKASGKTVST) the composition is skewed to polar residues. The tract at residues 144–178 (STIAKRSNAAPLSNTKKASGKTVSTAKAGVKQPER) is disordered. A phosphoserine mark is found at S283 and S299. The span at 460–472 (ESHETANLQDDRN) shows a compositional bias: basic and acidic residues. Disordered regions lie at residues 460-492 (ESHE…KHTK), 528-555 (VKRN…IDKE), and 596-685 (LSDK…SLDE). Residues 473 to 483 (SQSSSVSYLES) show a composition bias toward low complexity. Positions 596–612 (LSDKSHAHPGCLKEPHH) are enriched in basic and acidic residues. Positions 617–640 (GHVSHSSQKQCHKPQQQAPAMKTN) are enriched in polar residues. The segment covering 642 to 670 (HVKEELEHPGVEHFKEEDKLKLKKPEKNL) has biased composition (basic and acidic residues). Residue K644 forms a Glycyl lysine isopeptide (Lys-Gly) (interchain with G-Cter in SUMO2) linkage. Position 680 is a phosphoserine (S680). The PHD-type zinc-finger motif lies at 717 to 772 (SKQCGFCKKPHGNRFMVGCGRCDDWFHGDCVGLSLSQAQQMGEEDKEYVCVKCCAE). The disordered stretch occupies residues 860–904 (GQPVLPRRSSEEKSEKIPKESTTVTCTGEKASKPGTHEKQEMKKK). 2 stretches are compositionally biased toward basic and acidic residues: residues 867 to 878 (RSSEEKSEKIPK) and 889 to 900 (KASKPGTHEKQE). The TFIIS central domain occupies 927–1046 (IRQSVRHSLK…MIEKEQREVE (120 aa)). K964 is covalently cross-linked (Glycyl lysine isopeptide (Lys-Gly) (interchain with G-Cter in SUMO2)). S1014 bears the Phosphoserine mark. A disordered region spans residues 1078 to 1109 (EPAANKSLEKPEGSEKQKEEVDSMSKDTTSQH). The segment covering 1084–1102 (SLEKPEGSEKQKEEVDSMS) has biased composition (basic and acidic residues). Phosphoserine is present on residues S1133, S1148, and S1178. Disordered regions lie at residues 1171–1191 (FEEE…RPEM), 1360–1380 (STSH…PPDK), and 1581–1623 (KQEE…VGKG). Residues 1581 to 1598 (KQEETVESKEKTLKRQLQ) show a composition bias toward basic and acidic residues. Phosphoserine occurs at positions 1614 and 1642. Disordered regions lie at residues 1643 to 1684 (PQFI…LPGL) and 1776 to 1800 (PSKS…PMRP). The segment covering 1666–1684 (ESKDGDSCRNGEKHMLPGL) has biased composition (basic and acidic residues). Over residues 1781–1797 (TFTSRSTSPRTSTNFSP) the composition is skewed to low complexity. An asymmetric dimethylarginine mark is found at R1867 and R1877. The segment at 1884–2039 (FYQVKDIRRP…DHTDRTKSKR (156 aa)) is disordered. Composition is skewed to basic and acidic residues over residues 1888–1902 (KDIR…DPWG) and 1912–2039 (PFNR…KSKR). A phosphoserine mark is found at S1898 and S1925. Residue K1931 forms a Glycyl lysine isopeptide (Lys-Gly) (interchain with G-Cter in SUMO2) linkage.

As to expression, ubiquitous. Expression is significantly reduced or lost in glioblastomas, glioblastoma cell lines, anaplastic astrocytomas, and astrocytomas.

The chain is PHD finger protein 3 (PHF3) from Homo sapiens (Human).